The sequence spans 3106 residues: Probable polyketide synthase 29 (3106 aa).

The segment covering 1–11 (MVQNTDNTRNS) has biased composition (polar residues). Positions 1–20 (MVQNTDNTRNSKLIRDRNDY) are disordered. Residues 28 to 461 (SGDIAVIGIG…GSNVCLILSE (434 aa)) enclose the Ketosynthase family 3 (KS3) domain. Active-site for beta-ketoacyl synthase activity residues include Cys-200, His-339, and His-384. The tract at residues 661-694 (GVSADIIIGHSLGEVSSPYCSGMIDFQTLCYLTY) is acyl/malonyl transferase. Ser-671 acts as the For acyl/malonyl transferase activity in catalysis. The tract at residues 961 to 1082 (PSIHGLGNNT…GNFSLTKHNS (122 aa)) is N-terminal hotdog fold. Positions 961 to 1266 (PSIHGLGNNT…CALVSLDSNP (306 aa)) constitute a PKS/mFAS DH domain. His-994 acts as the Proton acceptor; for dehydratase activity in catalysis. The segment at 1099 to 1266 (NFTSISKQDF…CALVSLDSNP (168 aa)) is C-terminal hotdog fold. The active-site Proton donor; for dehydratase activity is the Asp-1171. A Carrier domain is found at 2533–2610 (NNNEIIRSTI…QSIEIILSAH (78 aa)). Ser-2570 is modified (O-(pantetheine 4'-phosphoryl)serine). Residues 2609-2656 (AHNNNNKNNNNNNNINNNNKNNNNNNNKNNNNINNNINNNKNNNNNNN) are a coiled coil. Positions 2614–2656 (NKNNNNNNNINNNNKNNNNNNNKNNNNINNNINNNKNNNNNNN) are disordered.

Pantetheine 4'-phosphate is required as a cofactor.

In terms of biological role, probable polyketide synthase. The polypeptide is Probable polyketide synthase 29 (pks29) (Dictyostelium discoideum (Social amoeba)).